The following is a 317-amino-acid chain: L-lactate dehydrogenase (317 aa).

NAD(+) contacts are provided by residues V17, D38, K43, Y68, and G82–V83. R91 lines the substrate pocket. NAD(+) is bound by residues S104, V121–N123, and S146. Position 123–126 (N123–D126) interacts with substrate. A substrate-binding site is contributed by D151–R154. Residues K156 and H171 each coordinate beta-D-fructose 1,6-bisphosphate. Catalysis depends on H178, which acts as the Proton acceptor. Y224 carries the post-translational modification Phosphotyrosine. T233 contacts substrate.

The protein belongs to the LDH/MDH superfamily. LDH family. Homotetramer.

It is found in the cytoplasm. The catalysed reaction is (S)-lactate + NAD(+) = pyruvate + NADH + H(+). It functions in the pathway fermentation; pyruvate fermentation to lactate; (S)-lactate from pyruvate: step 1/1. With respect to regulation, allosterically activated by fructose 1,6-bisphosphate (FBP). In terms of biological role, catalyzes the conversion of lactate to pyruvate. The polypeptide is L-lactate dehydrogenase (Clostridium perfringens (strain ATCC 13124 / DSM 756 / JCM 1290 / NCIMB 6125 / NCTC 8237 / Type A)).